The primary structure comprises 447 residues: Glutamate--tRNA ligase 2 (447 aa).

Residues 8–18 (PSPTGYLHVGN) carry the 'HIGH' region motif. The short motif at 239-243 (KLSKR) is the 'KMSKS' region element. Lys242 serves as a coordination point for ATP.

Belongs to the class-I aminoacyl-tRNA synthetase family. Glutamate--tRNA ligase type 1 subfamily. Monomer.

The protein resides in the cytoplasm. The catalysed reaction is tRNA(Glu) + L-glutamate + ATP = L-glutamyl-tRNA(Glu) + AMP + diphosphate. Its function is as follows. Catalyzes the attachment of glutamate to tRNA(Glu) in a two-step reaction: glutamate is first activated by ATP to form Glu-AMP and then transferred to the acceptor end of tRNA(Glu). The sequence is that of Glutamate--tRNA ligase 2 from Granulibacter bethesdensis (strain ATCC BAA-1260 / CGDNIH1).